A 436-amino-acid chain; its full sequence is tRNA modification GTPase MnmE (436 aa).

(6S)-5-formyl-5,6,7,8-tetrahydrofolate-binding residues include R20, E77, and K117. Positions 214–360 (GLKIVIAGAP…FIKELESFCL (147 aa)) constitute a TrmE-type G domain. GTP is bound by residues 224-229 (NSGKSS), 243-249 (MEEAGTT), and 268-271 (DTAG). S228 and T249 together coordinate Mg(2+). K436 lines the (6S)-5-formyl-5,6,7,8-tetrahydrofolate pocket.

The protein belongs to the TRAFAC class TrmE-Era-EngA-EngB-Septin-like GTPase superfamily. TrmE GTPase family. In terms of assembly, homodimer. Heterotetramer of two MnmE and two MnmG subunits. It depends on K(+) as a cofactor.

The protein resides in the cytoplasm. In terms of biological role, exhibits a very high intrinsic GTPase hydrolysis rate. Involved in the addition of a carboxymethylaminomethyl (cmnm) group at the wobble position (U34) of certain tRNAs, forming tRNA-cmnm(5)s(2)U34. The protein is tRNA modification GTPase MnmE of Bartonella quintana (strain Toulouse) (Rochalimaea quintana).